A 566-amino-acid polypeptide reads, in one-letter code: Mannitol 2-dehydrogenase (566 aa).

106 to 117 lines the NAD(+) pocket; sequence IVHVGVGGFHRA.

Belongs to the mannitol dehydrogenase family. In terms of assembly, monomer.

It carries out the reaction D-mannitol + NAD(+) = D-fructose + NADH + H(+). Functionally, catalyzes the NAD(H)-dependent interconversion of D-fructose and D-mannitol in the mannitol metabolic pathway. The protein is Mannitol 2-dehydrogenase of Pyrenophora tritici-repentis (strain Pt-1C-BFP) (Wheat tan spot fungus).